We begin with the raw amino-acid sequence, 148 residues long: Cell division protein SepF (148 aa).

The disordered stretch occupies residues Met-1 to Pro-59. Residues Met-33–Val-48 show a composition bias toward polar residues.

Belongs to the SepF family. Homodimer. Interacts with FtsZ.

It is found in the cytoplasm. In terms of biological role, cell division protein that is part of the divisome complex and is recruited early to the Z-ring. Probably stimulates Z-ring formation, perhaps through the cross-linking of FtsZ protofilaments. Its function overlaps with FtsA. The protein is Cell division protein SepF of Lactobacillus delbrueckii subsp. bulgaricus (strain ATCC BAA-365 / Lb-18).